Here is a 1217-residue protein sequence, read N- to C-terminus: ATP-dependent helicase/nuclease subunit A (1217 aa).

The UvrD-like helicase ATP-binding domain maps to 10 to 475 (VIWTDAQWQS…IDLSQNFRSR (466 aa)). 31–38 (AAAGSGKT) contributes to the ATP binding site. The 311-residue stretch at 476 to 786 (KEVLSTTNYI…RMMTIHSSKG (311 aa)) folds into the UvrD-like helicase C-terminal domain.

The protein belongs to the helicase family. AddA subfamily. Heterodimer of AddA and AddB/RexB. Mg(2+) serves as cofactor.

The enzyme catalyses Couples ATP hydrolysis with the unwinding of duplex DNA by translocating in the 3'-5' direction.. It catalyses the reaction ATP + H2O = ADP + phosphate + H(+). Its function is as follows. The heterodimer acts as both an ATP-dependent DNA helicase and an ATP-dependent, dual-direction single-stranded exonuclease. Recognizes the chi site generating a DNA molecule suitable for the initiation of homologous recombination. The AddA nuclease domain is required for chi fragment generation; this subunit has the helicase and 3' -&gt; 5' nuclease activities. This is ATP-dependent helicase/nuclease subunit A from Staphylococcus aureus (strain MW2).